We begin with the raw amino-acid sequence, 361 residues long: DNA replication and repair protein RecF (361 aa).

Residue 30–37 (GPNGSGKT) coordinates ATP.

It belongs to the RecF family.

The protein resides in the cytoplasm. Its function is as follows. The RecF protein is involved in DNA metabolism; it is required for DNA replication and normal SOS inducibility. RecF binds preferentially to single-stranded, linear DNA. It also seems to bind ATP. The protein is DNA replication and repair protein RecF of Yersinia enterocolitica serotype O:8 / biotype 1B (strain NCTC 13174 / 8081).